The chain runs to 156 residues: Ribosomal RNA large subunit methyltransferase H (156 aa).

Residues leucine 73, glycine 104, and 123–128 (ISSMTL) contribute to the S-adenosyl-L-methionine site.

It belongs to the RNA methyltransferase RlmH family. As to quaternary structure, homodimer.

The protein localises to the cytoplasm. It carries out the reaction pseudouridine(1915) in 23S rRNA + S-adenosyl-L-methionine = N(3)-methylpseudouridine(1915) in 23S rRNA + S-adenosyl-L-homocysteine + H(+). Its function is as follows. Specifically methylates the pseudouridine at position 1915 (m3Psi1915) in 23S rRNA. This chain is Ribosomal RNA large subunit methyltransferase H, found in Burkholderia cenocepacia (strain HI2424).